Consider the following 517-residue polypeptide: Putative lipase ATG15 (517 aa).

At 1–6 (MRASTH) the chain is on the cytoplasmic side. A helical; Signal-anchor for type II membrane protein membrane pass occupies residues 7–27 (SWLLLVVVLSLSSFTVNAVIL). Residues 28–517 (EGLIPPRSHL…TNWHFTDETL (490 aa)) lie on the Lumenal side of the membrane. Residues Asn-187, Asn-221, and Asn-303 are each glycosylated (N-linked (GlcNAc...) asparagine). Ser-319 serves as the catalytic Charge relay system. The interval 466–499 (GWRWPWHRGDSADDDGDSDEDTDEDDKLAVPKAR) is disordered. The span at 477 to 491 (ADDDGDSDEDTDEDD) shows a compositional bias: acidic residues.

This sequence belongs to the AB hydrolase superfamily. Lipase family. As to quaternary structure, binds to both phosphatidylinositol (PI) and phosphatidylinositol 3,5-bisphosphate (PIP2).

It localises to the endosome. Its subcellular location is the multivesicular body membrane. The protein resides in the prevacuolar compartment membrane. It catalyses the reaction a triacylglycerol + H2O = a diacylglycerol + a fatty acid + H(+). Its function is as follows. Lipase which is essential for lysis of subvacuolar cytoplasm to vacuole targeted bodies and intravacuolar autophagic bodies. Involved in the lysis of intravacuolar multivesicular body (MVB) vesicles. The intravacuolar membrane disintegration by ATG15 is critical to life span extension. This chain is Putative lipase ATG15 (ATG15), found in Mycosarcoma maydis (Corn smut fungus).